A 760-amino-acid polypeptide reads, in one-letter code: ATP-dependent zinc metalloprotease FtsH (760 aa).

At 1–5 the chain is on the cytoplasmic side; that stretch reads MNRKN. Residues 6–26 form a helical membrane-spanning segment; the sequence is VTRTITAIAVVVLLGWSFFYF. Topologically, residues 27–110 are extracellular; it reads SDDTRGYKPV…KVSTVVNQGS (84 aa). Residues 111-131 traverse the membrane as a helical segment; that stretch reads ILGELLVYVLPLLLLVGLFVM. The Cytoplasmic portion of the chain corresponds to 132–760; the sequence is FSRMQGGARM…EVSRTKPAHG (629 aa). 203 to 210 contacts ATP; it reads GPPGTGKT. H425 serves as a coordination point for Zn(2+). Residue E426 is part of the active site. Zn(2+) contacts are provided by H429 and D501. Residues 616-760 are disordered; that stretch reads DFGGRIPSDK…EVSRTKPAHG (145 aa). Residues 650–669 are compositionally biased toward low complexity; the sequence is AFKAAIAQATQAAEAARSDA. Residues 740–750 show a composition bias toward acidic residues; it reads GSDESSAEQDD.

It in the central section; belongs to the AAA ATPase family. The protein in the C-terminal section; belongs to the peptidase M41 family. In terms of assembly, homohexamer. Requires Zn(2+) as cofactor.

Its subcellular location is the cell membrane. Its function is as follows. Acts as a processive, ATP-dependent zinc metallopeptidase for both cytoplasmic and membrane proteins. Plays a role in the quality control of integral membrane proteins. The polypeptide is ATP-dependent zinc metalloprotease FtsH (Mycobacterium tuberculosis (strain CDC 1551 / Oshkosh)).